A 391-amino-acid chain; its full sequence is Casein kinase II subunit alpha (391 aa).

The tract at residues Q36 to L41 is interaction with beta subunit. Residues Y39–F324 enclose the Protein kinase domain. Residues L45–V53 and K68 contribute to the ATP site. D156 acts as the Proton acceptor in catalysis. Residues T344 and T360 each carry the phosphothreonine; by CDK1 modification. Phosphoserine; by CDK1 occurs at positions 362 and 370.

Belongs to the protein kinase superfamily. Ser/Thr protein kinase family. CK2 subfamily. Heterotetramer composed of two catalytic subunits (alpha chain and/or alpha' chain) and two regulatory subunits (beta chains). The tetramer can exist as a combination of 2 alpha/2 beta, 2 alpha'/2 beta or 1 alpha/1 alpha'/2 beta subunits. Also part of a CK2-SPT16-SSRP1 complex composed of SSRP1, SUPT16H, CSNK2A1, CSNK2A2 and CSNK2B, which forms following UV irradiation. Interacts with RNPS1. Interacts with SNAI1. Interacts with PML. Interacts with CCAR2. Interacts with HIRIP3. Phosphorylated at Thr-344, Thr-360, Ser-362 and Ser-370 by CDK1 in prophase and metaphase and dephosphorylated during anaphase. Phosphorylation does not directly affect casein kinase 2 activity, but may contribute to its regulation by forming binding sites for interacting proteins and/or targeting it to different compartments.

The protein localises to the nucleus. It carries out the reaction L-seryl-[protein] + ATP = O-phospho-L-seryl-[protein] + ADP + H(+). It catalyses the reaction L-threonyl-[protein] + ATP = O-phospho-L-threonyl-[protein] + ADP + H(+). With respect to regulation, constitutively active protein kinase whose activity is not directly affected by phosphorylation. Seems to be regulated by level of expression and localization. Functionally, catalytic subunit of a constitutively active serine/threonine-protein kinase complex that phosphorylates a large number of substrates containing acidic residues C-terminal to the phosphorylated serine or threonine. Regulates numerous cellular processes, such as cell cycle progression, apoptosis and transcription, as well as viral infection. May act as a regulatory node which integrates and coordinates numerous signals leading to an appropriate cellular response. During mitosis, functions as a component of the p53/TP53-dependent spindle assembly checkpoint (SAC) that maintains cyclin-B-CDK1 activity and G2 arrest in response to spindle damage. Also required for p53/TP53-mediated apoptosis, phosphorylating 'Ser-392' of p53/TP53 following UV irradiation. Phosphorylates a number of DNA repair proteins in response to DNA damage, such as MDC1, MRE11, RAD9A, RAD51 and HTATSF1, promoting their recruitment to DNA damage sites. Can also negatively regulate apoptosis. Phosphorylates the caspases CASP9 and CASP2 and the apoptotic regulator NOL3. Phosphorylation protects CASP9 from cleavage and activation by CASP8, and inhibits the dimerization of CASP2 and activation of CASP8. Phosphorylates YY1, protecting YY1 from cleavage by CASP7 during apoptosis. Regulates transcription by direct phosphorylation of RNA polymerases I, II, III and IV. Also phosphorylates and regulates numerous transcription factors including NF-kappa-B, STAT1, CREB1, IRF1, IRF2, ATF1, ATF4, SRF, MAX, JUN, FOS, MYC and MYB. Phosphorylates Hsp90 and its co-chaperones FKBP4 and CDC37, which is essential for chaperone function. Mediates sequential phosphorylation of FNIP1, promoting its gradual interaction with Hsp90, leading to activate both kinase and non-kinase client proteins of Hsp90. Regulates Wnt signaling by phosphorylating CTNNB1 and the transcription factor LEF1. Acts as an ectokinase that phosphorylates several extracellular proteins. Phosphorylates PML at 'Ser-565' and primes it for ubiquitin-mediated degradation. Plays an important role in the circadian clock function by phosphorylating BMAL1 at 'Ser-90' which is pivotal for its interaction with CLOCK and which controls CLOCK nuclear entry. Phosphorylates FMR1, promoting FMR1-dependent formation of a membraneless compartment. May phosphorylate histone H2A on 'Ser-1'. The chain is Casein kinase II subunit alpha (Csnk2a1) from Mus musculus (Mouse).